The following is a 150-amino-acid chain: 3-hydroxyacyl-[acyl-carrier-protein] dehydratase FabZ (150 aa).

The active site involves His-54.

This sequence belongs to the thioester dehydratase family. FabZ subfamily.

Its subcellular location is the cytoplasm. The catalysed reaction is a (3R)-hydroxyacyl-[ACP] = a (2E)-enoyl-[ACP] + H2O. Involved in unsaturated fatty acids biosynthesis. Catalyzes the dehydration of short chain beta-hydroxyacyl-ACPs and long chain saturated and unsaturated beta-hydroxyacyl-ACPs. This is 3-hydroxyacyl-[acyl-carrier-protein] dehydratase FabZ from Aliivibrio fischeri (strain ATCC 700601 / ES114) (Vibrio fischeri).